Here is a 501-residue protein sequence, read N- to C-terminus: Probable cytosol aminopeptidase (501 aa).

Mn(2+) contacts are provided by K270 and D275. K282 is an active-site residue. D293, D352, and E354 together coordinate Mn(2+). The active site involves R356.

It belongs to the peptidase M17 family. It depends on Mn(2+) as a cofactor.

It is found in the cytoplasm. It catalyses the reaction Release of an N-terminal amino acid, Xaa-|-Yaa-, in which Xaa is preferably Leu, but may be other amino acids including Pro although not Arg or Lys, and Yaa may be Pro. Amino acid amides and methyl esters are also readily hydrolyzed, but rates on arylamides are exceedingly low.. The catalysed reaction is Release of an N-terminal amino acid, preferentially leucine, but not glutamic or aspartic acids.. In terms of biological role, presumably involved in the processing and regular turnover of intracellular proteins. Catalyzes the removal of unsubstituted N-terminal amino acids from various peptides. The protein is Probable cytosol aminopeptidase of Wigglesworthia glossinidia brevipalpis.